Consider the following 268-residue polypeptide: Nickel import ATP-binding protein NikE (268 aa).

Positions 4–252 (LNVSGLSHHY…SSDAGRVLQN (249 aa)) constitute an ABC transporter domain. 45 to 52 (GRSGCGKS) serves as a coordination point for ATP.

The protein belongs to the ABC transporter superfamily. Nickel importer (TC 3.A.1.5.3) family. The complex is composed of two ATP-binding proteins (NikD and NikE), two transmembrane proteins (NikB and NikC) and a solute-binding protein (NikA).

The protein localises to the cell inner membrane. It catalyses the reaction Ni(2+)(out) + ATP + H2O = Ni(2+)(in) + ADP + phosphate + H(+). Functionally, part of the ABC transporter complex NikABCDE involved in nickel import. Responsible for energy coupling to the transport system. This Shigella sonnei (strain Ss046) protein is Nickel import ATP-binding protein NikE.